Consider the following 112-residue polypeptide: Large ribosomal subunit protein eL30 (112 aa).

The protein belongs to the eukaryotic ribosomal protein eL30 family. As to expression, expressed in roots and leaves.

This is Large ribosomal subunit protein eL30 from Triticum aestivum (Wheat).